Reading from the N-terminus, the 413-residue chain is Serine/threonine transporter SstT (413 aa).

8 helical membrane passes run Ile19–Val39, Ala61–Gly81, Ile89–Phe109, Ala148–Leu168, Ile189–Leu209, Leu223–Val243, Ile297–Leu317, and Ile325–Gly345.

Belongs to the dicarboxylate/amino acid:cation symporter (DAACS) (TC 2.A.23) family.

Its subcellular location is the cell inner membrane. It catalyses the reaction L-serine(in) + Na(+)(in) = L-serine(out) + Na(+)(out). It carries out the reaction L-threonine(in) + Na(+)(in) = L-threonine(out) + Na(+)(out). Its function is as follows. Involved in the import of serine and threonine into the cell, with the concomitant import of sodium (symport system). The polypeptide is Serine/threonine transporter SstT (Pasteurella multocida (strain Pm70)).